A 968-amino-acid chain; its full sequence is MKSQNSKEQKSDFSYKETLNLLKTDFSMRANSVVREPEIQNFWAKNNIDFKLGSNNSGEIFTLHDGPPYANGALHMGHALNKVLKDIINKYKTLRGFRVHYVPGWDCHGLPIELKVLQNLKSDERKNLDTLNLRKKATDYAHIQINNQMEGFKRWGIWGDWDNPYLTLKKSYESAQIGVFGKMFLNGYIYRGLKPVHWSPSSRTALAEAELEYPDEHYSKSIYISLKITKISEEILLNFVQENLNIKREFFENNSFITIWTTTPWTIPANEAVAVNPKIKYVFAIDEEKRIYLFAKDLSTEISNKFNKDLKVLLEVKGSQLENIEYQHPSKNKNCRIVIGGDYITTESGTGIVHTAPGHGVDDFNVGQKYDLPITCVVDEKGNLNEYSGQFQGSNVLKDANDLIIEYLKGNNLLLLQENYKHRYPYDWRTKKPTIFRATEQWFASVNGFRSSALQAIEDVEWMPATGKKRIYSMVVGRGDWCISRQRSWGVPIPVFYKKNGNDILLNSEIINHIQELFSEHGADIWWDWDVKNLLPEKYARESDLWKKGTDTMDVWFDSGSSWAAVCELRSELKYPADLYLEGSDQHRGWFQSSLLTSVAVNNKPPYKKVLTHGFALDENGRKMSKSLGNVVDPNIIINGGNNKKTEPAYGADVLRLWVSSVDYSVDVPIGSNILKQLADVYRKVRNTARYLLGNIHDYDPNIDSYEIDQLPLLDQWMLGRLVEVTDQISNAYENYEFSKFFQILQSFCVVDLSNFYLDIAKDRLYVSSKSQFRRRSCQFVMSKVVENLAVLISPVLCHMAEDIWQNIPYLTKEKSVFQRGWPIFAQSWKNQILNEHIANLRNLRVEINKAIEGCRNKQIIGAALETEVNYLPEDKVVKDSLIWLQEFGSQDVDLFRDWLIVSNFQVVSDLVENSLIIDNNALGKIQIIKAQGQKCDRCWHYQKETFNGIQNTKLCKRCSNIINLEFT.

The short motif at 68–78 (PYANGALHMGH) is the 'HIGH' region element. Residue glutamate 582 participates in L-isoleucyl-5'-AMP binding. Residues 623–627 (KMSKS) carry the 'KMSKS' region motif. Lysine 626 is a binding site for ATP. Positions 936, 939, 956, and 959 each coordinate Zn(2+).

This sequence belongs to the class-I aminoacyl-tRNA synthetase family. IleS type 1 subfamily. In terms of assembly, monomer. Zn(2+) serves as cofactor.

The protein localises to the cytoplasm. The catalysed reaction is tRNA(Ile) + L-isoleucine + ATP = L-isoleucyl-tRNA(Ile) + AMP + diphosphate. Its function is as follows. Catalyzes the attachment of isoleucine to tRNA(Ile). As IleRS can inadvertently accommodate and process structurally similar amino acids such as valine, to avoid such errors it has two additional distinct tRNA(Ile)-dependent editing activities. One activity is designated as 'pretransfer' editing and involves the hydrolysis of activated Val-AMP. The other activity is designated 'posttransfer' editing and involves deacylation of mischarged Val-tRNA(Ile). The sequence is that of Isoleucine--tRNA ligase from Prochlorococcus marinus (strain AS9601).